The sequence spans 621 residues: SH2B adapter protein 2 (621 aa).

At Tyr47 the chain carries Phosphotyrosine. Ser130 bears the Phosphoserine mark. The disordered stretch occupies residues 144 to 165 (RASPEPEGGATPKTTEPVSEPR). In terms of domain architecture, PH spans 186 to 299 (DIQREGALRF…WVADIQGCVD (114 aa)). Residue Ser303 is modified to Phosphoserine. In terms of domain architecture, SH2 spans 409-507 (WFHGTLSRVK…SADITLRSYV (99 aa)). 2 disordered regions span residues 507 to 528 (VRAQGPPPDPGPAPNTAAPVPA) and 548 to 609 (PPTS…ATLG). Residues 552–570 (PSNGAGASSSSGSSSSATS) are compositionally biased toward low complexity. Residue Ser597 is modified to Phosphoserine. Tyr618 is subject to Phosphotyrosine.

The protein belongs to the SH2B adapter family. Homodimer. Interacts with KIT/c-KIT, SHC1, EPOR, PDGFR, VAV1 and VAV3. Interacts (via N-terminal region) with SHC1. Interacts (via the phosphorylated C-terminus) with GRB2. Interacts (via its SH2 domain) with EPOR, INSR and KIT. Interacts with GRB2 after B-cell antigen receptor stimulation. Interacts (via PH domain) with VAV3. Interacts with NTRK1, NTRK2 and NTRK3 (phosphorylated); after stimulation of the receptor by its extracellular ligand and subsequent autophosphorylation of the receptor. Binds INSR, GRB2, ASB6 and CAP. Insulin stimulation leads to dissociation of CAP. Binds CBS only when SH2B2/APS has become phosphorylated. INSR binding does not depend on the phosphorylation of SH2B2/APS. Post-translationally, phosphorylated on a tyrosine residue by NTRK1, NTRK2, NTRK3 and INSR after stimulation of the receptor by its extracellular ligand. Tyrosine phosphorylated by JAK2, KIT and other kinases activated by B-cell receptor in response to stimulation with cytokines, IL3, IL5, PDGF, IGF1, IGF2, CSF2/GM-CSF and cross-linking of the B-cell receptor complex. In terms of tissue distribution, detected in embryonic brain, spinal cord and cortical neurons.

The protein localises to the cytoplasm. Its subcellular location is the membrane. Adapter protein for several members of the tyrosine kinase receptor family. Involved in multiple signaling pathways. Binds to EPOR and suppresses EPO-induced STAT5 activation, possibly through a masking effect on STAT5 docking sites in EPOR. Suppresses PDGF-induced mitogenesis. Involved in stimulation of glucose uptake by insulin. Involved in coupling from immunoreceptor to Ras signaling. Acts as a negative regulator of cytokine signaling in collaboration with CBL. Induces cytoskeletal reorganization and neurite outgrowth in cultured neurons. This Rattus norvegicus (Rat) protein is SH2B adapter protein 2 (Sh2b2).